Here is a 362-residue protein sequence, read N- to C-terminus: N-alpha-acetyltransferase 30 (362 aa).

Residues 1–20 (MAEVPPGPSSLLPPPAPPAP) show a composition bias toward pro residues. Disordered stretches follow at residues 1–26 (MAEV…VEPR), 38–88 (CSED…NGLI), and 113–182 (ATTA…EEDE). Residues serine 39 and serine 55 each carry the phosphoserine modification. Over residues 39 to 48 (SEDEEDDEEH) the composition is skewed to acidic residues. Threonine 117 is subject to Phosphothreonine. Residues 149–165 (AVPSPVEAAAASDPAAA) show a composition bias toward low complexity. Serine 152 carries the post-translational modification Phosphoserine. The span at 173-182 (TEQEEEEEDE) shows a compositional bias: acidic residues. Phosphoserine occurs at positions 190, 196, and 199. Residues 214–362 (RYVRYESELQ…DALRLKLWLR (149 aa)) form the N-acetyltransferase domain. An N6-acetyllysine modification is found at lysine 233.

It belongs to the acetyltransferase family. MAK3 subfamily. Component of the N-terminal acetyltransferase C (NatC) complex, which is composed of NAA35, NAA38 and NAA30.

The protein localises to the cytoplasm. The protein resides in the nucleus. The enzyme catalyses N-terminal L-methionyl-L-leucyl-[protein] + acetyl-CoA = N-terminal N(alpha)-acetyl-L-methionyl-L-leucyl-[protein] + CoA + H(+). It catalyses the reaction N-terminal L-methionyl-L-isoleucyl-[protein] + acetyl-CoA = N-terminal N(alpha)-acetyl-L-methionyl-L-isoleucyl-[protein] + CoA + H(+). It carries out the reaction N-terminal L-methionyl-L-phenylalanyl-[protein] + acetyl-CoA = N-terminal N(alpha)-acetyl-L-methionyl-L-phenylalanyl-[protein] + CoA + H(+). The catalysed reaction is N-terminal L-methionyl-L-tryptophyl-[protein] + acetyl-CoA = N-terminal N(alpha)-acetyl-L-methionyl-L-tryptophyl-[protein] + CoA + H(+). The enzyme catalyses N-terminal L-methionyl-L-tyrosyl-[protein] + acetyl-CoA = N-terminal N(alpha)-acetyl-L-methionyl-L-tyrosyl-[protein] + CoA + H(+). Catalytic subunit of the N-terminal acetyltransferase C (NatC) complex. Catalyzes acetylation of the N-terminal methionine residues of peptides beginning with Met-Leu-Ala and Met-Leu-Gly. N-terminal acetylation protects proteins from ubiquitination and degradation by the N-end rule pathway. Necessary for the lysosomal localization and function of ARL8B sugeesting that ARL8B is a NatC substrate. This Homo sapiens (Human) protein is N-alpha-acetyltransferase 30 (NAA30).